Consider the following 159-residue polypeptide: Putative pre-16S rRNA nuclease (159 aa).

The protein belongs to the YqgF nuclease family.

It is found in the cytoplasm. Its function is as follows. Could be a nuclease involved in processing of the 5'-end of pre-16S rRNA. The chain is Putative pre-16S rRNA nuclease from Thermobifida fusca (strain YX).